A 244-amino-acid polypeptide reads, in one-letter code: 5-oxoprolinase subunit A (244 aa).

Belongs to the LamB/PxpA family. Forms a complex composed of PxpA, PxpB and PxpC.

It catalyses the reaction 5-oxo-L-proline + ATP + 2 H2O = L-glutamate + ADP + phosphate + H(+). In terms of biological role, catalyzes the cleavage of 5-oxoproline to form L-glutamate coupled to the hydrolysis of ATP to ADP and inorganic phosphate. The sequence is that of 5-oxoprolinase subunit A from Escherichia coli O7:K1 (strain IAI39 / ExPEC).